The following is a 252-amino-acid chain: CLAVATA3/ESR (CLE)-related protein 4A-2 (252 aa).

Positions 1–21 (MAKNAMLCLLILRVVLALAFA) are cleaved as a signal peptide. The segment at 21–83 (ATNKKGDEEP…SNQLPNNNWM (63 aa)) is required for secretion from the host cytoplasm to the host apoplasm. N32 carries N-linked (GlcNAc...) asparagine glycosylation. Residues 116–252 (RKTGMHSQRH…APAGPDPIHH (137 aa)) form a disordered region. Composition is skewed to basic and acidic residues over residues 125–137 (HHEE…EKRV), 144–179 (PIHH…EKRV), 186–200 (PIHH…EKRA), and 207–242 (PTHH…EKRG). Residues 127-135 (EETTLEQEK) form an A-1 repeat. Positions 127-219 (EETTLEQEKR…HEETTLEQEK (93 aa)) are 6 X approximate repeat A. One copy of the CLE-1 repeat lies at 136 to 147 (RVAGAGPDPIHH). The tract at residues 136–252 (RVAGAGPDPI…APAGPDPIHH (117 aa)) is 6 X approximate repeat CLE. One copy of the A-2 repeat lies at 148 to 156 (QDTTLEQEK). One copy of the CLE-2 repeat lies at 157–168 (RAVPAGPDPKHH). One copy of the A-3 repeat lies at 169–177 (EETTLEQEK). A CLE-3 repeat occupies 178 to 189 (RVAGAGPDPIHH). Residues 190 to 198 (QDTTLEQEK) form an A-4 repeat. Residues 199 to 210 (RAVPAGPDPTHH) form a CLE-4 repeat. The stretch at 211-219 (EETTLEQEK) is one A-5 repeat. The stretch at 220–231 (RAVPAGPDPKHH) is one CLE-5 repeat. One copy of the A-6 repeat lies at 232–240 (EETTFEQEK). One copy of the CLE-6 repeat lies at 241-252 (RGAPAGPDPIHH).

It belongs to the CLV3/ESR signal peptide family. As to expression, highly expressed exclusively within the dorsal esophageal gland cell during syncytium formation in host plants.

Its subcellular location is the secreted. The protein localises to the host cytoplasm. The protein resides in the host extracellular space. It is found in the extracellular space. It localises to the apoplast. In terms of biological role, mimics host plant CLE extracellular signal peptides that regulate cell fate. May play a role in the differentiation or division of feeding cells (syncytia) induced in plant roots during infection. This Globodera rostochiensis (Golden nematode worm) protein is CLAVATA3/ESR (CLE)-related protein 4A-2 (CLE-4A-2).